The sequence spans 286 residues: Orotidine 5'-phosphate decarboxylase (286 aa).

Lysine 97 acts as the Proton donor in catalysis.

It belongs to the OMP decarboxylase family. Type 2 subfamily.

It carries out the reaction orotidine 5'-phosphate + H(+) = UMP + CO2. The protein operates within pyrimidine metabolism; UMP biosynthesis via de novo pathway; UMP from orotate: step 2/2. The sequence is that of Orotidine 5'-phosphate decarboxylase (pyrF) from Clostridium acetobutylicum (strain ATCC 824 / DSM 792 / JCM 1419 / IAM 19013 / LMG 5710 / NBRC 13948 / NRRL B-527 / VKM B-1787 / 2291 / W).